The sequence spans 900 residues: Vacuolar membrane protein pep3 (900 aa).

The interval 1-20 (MSLAEDWIDPNSSEDSDIQE) is disordered. 4 TPR repeats span residues 314–345 (HLAFLDLDTLYIVNRVNGKESYQQRVNLSPHE), 373–406 (NNETREASLVFLEKGDFEKALECANTAKVRNTVL), 408–436 (GYAEFLMEHEEYERAATLYAETLKSVEEV), and 546–579 (MKDQSYIMHYWVQRENYEKALETLNEGVSQETLI). A CHCR repeat occupies 602–756 (DLDVHALIPS…MFSKKSGIKE (155 aa)). An RING-type; atypical zinc finger spans residues 837 to 884 (CWHCNQPLFSEPFVLFPCQHAFHRSCMLEKTYKLASEKNILKECQLCG).

This sequence belongs to the VPS18 family.

It localises to the vacuole membrane. Functionally, required for vacuolar biogenesis. The protein is Vacuolar membrane protein pep3 (pep3) of Schizosaccharomyces pombe (strain 972 / ATCC 24843) (Fission yeast).